The sequence spans 292 residues: Protein-L-isoaspartate O-methyltransferase (292 aa).

Residues 1 to 76 (MTEKKRFPLS…AAAPSSNERA (76 aa)) are disordered. The segment covering 28–48 (NRSSTSGKVATPQTATQNASQ) has biased composition (polar residues). S138 is an active-site residue.

Belongs to the methyltransferase superfamily. L-isoaspartyl/D-aspartyl protein methyltransferase family.

It localises to the cytoplasm. It carries out the reaction [protein]-L-isoaspartate + S-adenosyl-L-methionine = [protein]-L-isoaspartate alpha-methyl ester + S-adenosyl-L-homocysteine. Catalyzes the methyl esterification of L-isoaspartyl residues in peptides and proteins that result from spontaneous decomposition of normal L-aspartyl and L-asparaginyl residues. It plays a role in the repair and/or degradation of damaged proteins. The protein is Protein-L-isoaspartate O-methyltransferase of Janthinobacterium sp. (strain Marseille) (Minibacterium massiliensis).